Consider the following 352-residue polypeptide: uncharacterized protein (352 aa).

It to M.pneumoniae MPN_633 (in the N-terminal section), and M.pneumoniae MPN_634 (in the C-terminal section).

This is an uncharacterized protein from Mycoplasma pneumoniae (strain ATCC 29342 / M129 / Subtype 1) (Mycoplasmoides pneumoniae).